The following is a 307-amino-acid chain: MSVKEHHSTVGAIAEAVAEAAHGDLPGTKGHHPISAVIGTAITGGRQNAGTKGYLTAYLKQLETNPLRTKMLTAGTLAGSQELLASWLAKDRNKNGNYFTARVPKMATYGALVSAPLGHFLIWILQKMFQNRKSLRAKILQILVSNLIVAPIQNSVYLVAMAIIAGAKTWKQVQATVRVGFWKVMKVSWLSSPLCLAFAQKFLPEAAWMPFFNLVSFFIGTYINYITKKKRLAALRRKHFGDGAHGDHRHDRERERDRERERHSSPPHGHGPSHGGRPINPTLGSHHGGGPVPPPQDYPSLGQNPRY.

The next 3 helical transmembrane spans lie at 106–125, 146–167, and 207–227; these read MATYGALVSAPLGHFLIWIL, NLIVAPIQNSVYLVAMAIIAGA, and AWMPFFNLVSFFIGTYINYIT. Basic and acidic residues predominate over residues 241-264; sequence GDGAHGDHRHDRERERDRERERHS. The segment at 241-307 is disordered; the sequence is GDGAHGDHRH…YPSLGQNPRY (67 aa). Residues 266–278 show a composition bias toward low complexity; sequence PPHGHGPSHGGRP.

Belongs to the peroxisomal membrane protein PXMP2/4 family. In terms of assembly, self-assembles into detergent-resistant oligomers and forms a complex with hex-1 assemblies.

It is found in the peroxisome membrane. Its subcellular location is the cell septum. Its function is as follows. Woronin sorting complex protein involved in both Woronin bodies (WB) formation and inherence. Localizes to large peroxisome membranes where it self-assembles into detergent-resistant oligomers that envelop hex-1 assemblies, producing asymmetrical nascent WBs. These structures are then delivered to the cell cortex, which permits partitioning of the nascent WB and WB inheritance. The polypeptide is Woronin sorting complex protein (Neurospora crassa (strain ATCC 24698 / 74-OR23-1A / CBS 708.71 / DSM 1257 / FGSC 987)).